The chain runs to 164 residues: Magnesium-dependent phosphatase 1 (164 aa).

Asp-11 (nucleophile) is an active-site residue. Residue Asp-11 participates in Mg(2+) binding. Phosphate is bound by residues Leu-12 and Asp-13. Residue Asp-13 participates in Mg(2+) binding. The active-site Proton donor is the Asp-13. Trp-20 provides a ligand contact to substrate. Phosphate contacts are provided by Ser-69, Arg-70, and Lys-100. Arg-70 lines the substrate pocket. Asp-123 is a Mg(2+) binding site.

Belongs to the HAD-like hydrolase superfamily. The cofactor is Mg(2+).

It catalyses the reaction O-phospho-L-tyrosyl-[protein] + H2O = L-tyrosyl-[protein] + phosphate. Its activity is regulated as follows. Inhibited by vanadate and zinc, and slightly by calcium. Functionally, magnesium-dependent phosphatase which may act as a tyrosine phosphatase. The chain is Magnesium-dependent phosphatase 1 (Mdp1) from Mus musculus (Mouse).